A 489-amino-acid polypeptide reads, in one-letter code: CUGBP Elav-like family member 1-A (489 aa).

RRM domains are found at residues 16 to 99, 108 to 188, and 404 to 482; these read IKMF…PADS, RKLF…FADT, and ANLF…LKRS. Positions 183–210 are necessary for oligomerization and EDEN-dependent deadenylation; the sequence is VKFADTQKDKEQKRMTQQLQQQMQQLNA.

The protein belongs to the CELF/BRUNOL family. As to quaternary structure, oligomer. Oligomerization is required for RNA-binding and EDEN-dependent deadenylation. Phosphorylated during oocyte maturation and dephosphorylated following egg activation. Dephosphorylation is calcium dependent and correlates with the increase in the activity of EDEN-dependent deadenylation.

The protein localises to the nucleus. Its subcellular location is the cytoplasm. RNA-binding protein implicated in the regulation of several post-transcriptional events. May be involved in pre-mRNA alternative splicing, mRNA translation activation and stability. Mediates the rapid and sequence-specific cytoplasmic deadenylation of EDEN-containing maternal mRNAs following fertilization. Binds to AU-rich sequences (AREs) of jun mRNA. Binds to the embryonic deadenylation element (EDEN) motif localized in the 3'-UTR of maternal mRNAs. Binds to RNA containing several repeats of the consensus sequence 5'-UGU-3'. EDEN-dependent deadenylation is enhanced by the presence of an additional cis element composed of three AUU repeats. The polypeptide is CUGBP Elav-like family member 1-A (cugbp1-a) (Xenopus laevis (African clawed frog)).